Consider the following 121-residue polypeptide: Large ribosomal subunit protein uL22 (121 aa).

This sequence belongs to the universal ribosomal protein uL22 family. In terms of assembly, part of the 50S ribosomal subunit.

Functionally, this protein binds specifically to 23S rRNA; its binding is stimulated by other ribosomal proteins, e.g. L4, L17, and L20. It is important during the early stages of 50S assembly. It makes multiple contacts with different domains of the 23S rRNA in the assembled 50S subunit and ribosome. The globular domain of the protein is located near the polypeptide exit tunnel on the outside of the subunit, while an extended beta-hairpin is found that lines the wall of the exit tunnel in the center of the 70S ribosome. The polypeptide is Large ribosomal subunit protein uL22 (Synechococcus sp. (strain WH7803)).